The following is a 333-amino-acid chain: ATP synthase subunit a (333 aa).

Positions 1–32 (MIYLHNKRKGMLKRLSALIVIGLLMNLPAVFA) are cleaved as a signal peptide. Transmembrane regions (helical) follow at residues 100–120 (HVVM…GVGN), 161–181 (FMPF…IGLV), 185–205 (ATAT…FLVT), 229–249 (LMWI…PFAL), 254–274 (FANM…IFVF), 279–299 (IAPV…LVAF), and 300–320 (LQAY…VAHE).

It belongs to the ATPase A chain family. As to quaternary structure, F-type ATPases have 2 components, CF(1) - the catalytic core - and CF(0) - the membrane proton channel. CF(1) has five subunits: alpha(3), beta(3), gamma(1), delta(1), epsilon(1). CF(0) has four main subunits: a, b, b' and c.

It is found in the cell inner membrane. In terms of biological role, key component of the proton channel; it plays a direct role in the translocation of protons across the membrane. The protein is ATP synthase subunit a of Chloroherpeton thalassium (strain ATCC 35110 / GB-78).